The following is a 59-amino-acid chain: Cytochrome c oxidase subunit 9, mitochondrial (59 aa).

Residues 2–8 lie on the Mitochondrial matrix side of the membrane; that stretch reads TIAPITG. Residues 9–44 traverse the membrane as a helical segment; the sequence is TIKRRVIMDIVLGFSLGGVMASYWWWGFHMDKINKR. The Mitochondrial intermembrane segment spans residues 45–56; that stretch reads EKFYAELAERKK. A propeptide spans 57 to 59 (removed in mature form); the sequence is QEN.

The protein belongs to the fungal cytochrome c oxidase subunit 7a family. In terms of assembly, component of the cytochrome c oxidase (complex IV, CIV), a multisubunit enzyme composed of 12 subunits. The complex is composed of a catalytic core of 3 subunits COX1, COX2 and COX3, encoded in the mitochondrial DNA, and 9 supernumerary subunits COX4, COX5A (or COX5B), COX6, COX7, COX8, COX9, COX12, COX13 and COX26, which are encoded in the nuclear genome. The complex exists as a monomer or a dimer and forms supercomplexes (SCs) in the inner mitochondrial membrane with a dimer of ubiquinol-cytochrome c oxidoreductase (cytochrome b-c1 complex, complex III, CIII), resulting in 2 different assemblies (supercomplexes III(2)IV and III(2)IV(2)).

The protein localises to the mitochondrion inner membrane. Its pathway is energy metabolism; oxidative phosphorylation. Its function is as follows. Component of the cytochrome c oxidase, the last enzyme in the mitochondrial electron transport chain which drives oxidative phosphorylation. The respiratory chain contains 3 multisubunit complexes succinate dehydrogenase (complex II, CII), ubiquinol-cytochrome c oxidoreductase (cytochrome b-c1 complex, complex III, CIII) and cytochrome c oxidase (complex IV, CIV), that cooperate to transfer electrons derived from NADH and succinate to molecular oxygen, creating an electrochemical gradient over the inner membrane that drives transmembrane transport and the ATP synthase. Cytochrome c oxidase is the component of the respiratory chain that catalyzes the reduction of oxygen to water. Electrons originating from reduced cytochrome c in the intermembrane space (IMS) are transferred via the dinuclear copper A center (CU(A)) of COX2 and heme A of COX1 to the active site in COX1, a binuclear center (BNC) formed by heme A3 and copper B (CU(B)). The BNC reduces molecular oxygen to 2 water molecules using 4 electrons from cytochrome c in the IMS and 4 protons from the mitochondrial matrix. The sequence is that of Cytochrome c oxidase subunit 9, mitochondrial (COX9) from Saccharomyces cerevisiae (strain ATCC 204508 / S288c) (Baker's yeast).